The following is a 238-amino-acid chain: Large ribosomal subunit protein uL2 (238 aa).

The tract at residues 200 to 238 (HGGGLHQSVSRPSTVSRNAPPGRKVGHIAARRTGRKEGK) is disordered. A compositionally biased stretch (polar residues) spans 206–216 (QSVSRPSTVSR). Positions 223–238 (KVGHIAARRTGRKEGK) are enriched in basic residues.

This sequence belongs to the universal ribosomal protein uL2 family. In terms of assembly, part of the 50S ribosomal subunit. Forms a bridge to the 30S subunit in the 70S ribosome.

One of the primary rRNA binding proteins. Required for association of the 30S and 50S subunits to form the 70S ribosome, for tRNA binding and peptide bond formation. It has been suggested to have peptidyltransferase activity; this is somewhat controversial. Makes several contacts with the 16S rRNA in the 70S ribosome. The polypeptide is Large ribosomal subunit protein uL2 (Saccharolobus islandicus (strain Y.N.15.51 / Yellowstone #2) (Sulfolobus islandicus)).